A 470-amino-acid polypeptide reads, in one-letter code: UDP-N-acetylmuramate--L-alanine ligase (470 aa).

G118 to T124 is an ATP binding site.

This sequence belongs to the MurCDEF family.

It localises to the cytoplasm. The catalysed reaction is UDP-N-acetyl-alpha-D-muramate + L-alanine + ATP = UDP-N-acetyl-alpha-D-muramoyl-L-alanine + ADP + phosphate + H(+). It functions in the pathway cell wall biogenesis; peptidoglycan biosynthesis. Functionally, cell wall formation. This chain is UDP-N-acetylmuramate--L-alanine ligase, found in Cereibacter sphaeroides (strain ATCC 17029 / ATH 2.4.9) (Rhodobacter sphaeroides).